Reading from the N-terminus, the 355-residue chain is S-adenosylmethionine:tRNA ribosyltransferase-isomerase (355 aa).

The protein belongs to the QueA family. As to quaternary structure, monomer.

The protein localises to the cytoplasm. The enzyme catalyses 7-aminomethyl-7-carbaguanosine(34) in tRNA + S-adenosyl-L-methionine = epoxyqueuosine(34) in tRNA + adenine + L-methionine + 2 H(+). The protein operates within tRNA modification; tRNA-queuosine biosynthesis. In terms of biological role, transfers and isomerizes the ribose moiety from AdoMet to the 7-aminomethyl group of 7-deazaguanine (preQ1-tRNA) to give epoxyqueuosine (oQ-tRNA). The protein is S-adenosylmethionine:tRNA ribosyltransferase-isomerase of Erwinia tasmaniensis (strain DSM 17950 / CFBP 7177 / CIP 109463 / NCPPB 4357 / Et1/99).